A 1172-amino-acid polypeptide reads, in one-letter code: Thrombospondin-2 (1172 aa).

A signal peptide spans Met1–Ala18. A Laminin G-like domain is found at Gly19 to Asn215. Positions Gly19–Ala232 are heparin-binding. Asn151, Asn316, and Asn330 each carry an N-linked (GlcNAc...) asparagine glycan. The VWFC domain maps to Ser318 to Leu375. 3 consecutive TSP type-1 domains span residues Glu381–Asp431, Asp437–Pro492, and Asp494–Pro549. Intrachain disulfides connect Cys393–Cys425, Cys397–Cys430, Cys408–Cys415, Cys449–Cys486, Cys453–Cys491, Cys464–Cys476, Cys506–Cys543, Cys510–Cys548, Cys521–Cys533, Cys553–Cys564, Cys558–Cys574, Cys577–Cys588, Cys594–Cys610, Cys601–Cys619, Cys622–Cys646, Cys652–Cys665, Cys659–Cys678, Cys680–Cys691, Cys707–Cys715, Cys720–Cys740, Cys756–Cys776, Cys779–Cys799, Cys815–Cys835, Cys838–Cys858, Cys876–Cys896, Cys912–Cys932, and Cys948–Cys1169. A glycan (N-linked (GlcNAc...) asparagine) is linked at Asn457. The 41-residue stretch at Pro549–Glu589 folds into the EGF-like 1 domain. Asn584 carries N-linked (GlcNAc...) asparagine glycosylation. The region spanning Pro648–Gly692 is the EGF-like 2 domain. 8 TSP type-3 repeats span residues Glu693–Gln728, Glu729–Gln764, Ala765–Gln787, Ile788–Gln823, Arg824–Gln846, Thr847–Gln884, Ala885–Gln920, and Glu921–Glu956. Asn710 carries N-linked (GlcNAc...) asparagine glycosylation. The tract at residues Asn843 to Ile931 is disordered. The segment covering Thr847–Asp866 has biased composition (acidic residues). The span at Gln870 to Gln884 shows a compositional bias: polar residues. Positions Cys896–Val905 are enriched in acidic residues. The Cell attachment site motif lies at Arg928 to Asp930. In terms of domain architecture, TSP C-terminal spans Arg960 to Ile1172. N-linked (GlcNAc...) asparagine glycosylation occurs at Asn1069.

The protein belongs to the thrombospondin family. Homotrimer; disulfide-linked. Interacts (via the TSP type I repeats) with CD36; the interaction conveys an antiangiogenic effect. Interacts (via the TSP type I repeats) with HRG; the interaction blocks the antiangiogenic effect of THBS2 with CD36. Can bind to fibrinogen, fibronectin, laminin and type V collagen. In terms of tissue distribution, high expression in invertebral disk tissue.

Adhesive glycoprotein that mediates cell-to-cell and cell-to-matrix interactions. Ligand for CD36 mediating antiangiogenic properties. The protein is Thrombospondin-2 (THBS2) of Homo sapiens (Human).